A 77-amino-acid chain; its full sequence is MLNIGFGNYISPQRLLAIVSPDSAPIKRLILEAREHHHLIDATHGRRTRAVLVLDGEIIVLSALHPETLVARLSPPP.

The protein belongs to the RemA family.

The chain is Putative regulatory protein tsl2331 from Thermosynechococcus vestitus (strain NIES-2133 / IAM M-273 / BP-1).